The chain runs to 208 residues: MGKLVVLNHPLIDHKMALIRDKNTSTKTFRETVGEIGALITYEITKDLETVEIEVETPIQKTICRQLKKQLVIVPILRAGLGMVNGIHDMVPSAKIGHIGLYRDEKSLEPVSYYAKFPTDILDGVVLVVDPMLATGGSATAAITELKNRGAKDVRFVGLVGCPEGVKRLQMDHPDVPIYLAALDEKLNEVGYIVPGLGDAGDRLFGTK.

5-phospho-alpha-D-ribose 1-diphosphate contacts are provided by residues R78, R103, and 130–138; that span reads DPMLATGGS. Residues I193 and 198 to 200 each bind uracil; that span reads GDA. D199 serves as a coordination point for 5-phospho-alpha-D-ribose 1-diphosphate.

Belongs to the UPRTase family. Mg(2+) serves as cofactor.

The enzyme catalyses UMP + diphosphate = 5-phospho-alpha-D-ribose 1-diphosphate + uracil. Its pathway is pyrimidine metabolism; UMP biosynthesis via salvage pathway; UMP from uracil: step 1/1. Its activity is regulated as follows. Allosterically activated by GTP. Functionally, catalyzes the conversion of uracil and 5-phospho-alpha-D-ribose 1-diphosphate (PRPP) to UMP and diphosphate. The chain is Uracil phosphoribosyltransferase from Acholeplasma laidlawii (strain PG-8A).